The following is a 257-amino-acid chain: Gamma-secretase subunit APH-1B (257 aa).

The next 7 helical transmembrane spans lie at 5–25 (VFFG…VFTI), 32–52 (VIFL…SSVF), 66–86 (PVQN…QELF), 115–135 (LLAY…SFVN), 160–180 (AFMT…FFDG), 186–206 (WYTL…TFLS), and 213–233 (LVTA…VAGG).

The protein belongs to the APH-1 family. As to quaternary structure, probable component of the gamma-secretase complex, a complex composed of a presenilin homodimer (PSEN1 or PSEN2), nicastrin (NCSTN), APH1 (APH1A or APH1B) and PEN2. Such minimal complex is sufficient for secretase activity, although other components may exist. Interacts with PSEN1 and PSEN2.

The protein localises to the membrane. Functionally, probable subunit of the gamma-secretase complex, an endoprotease complex that catalyzes the intramembrane cleavage of integral proteins such as Notch receptors and APP (amyloid-beta precursor protein). It probably represents a stabilizing cofactor for the presenilin homodimer that promotes the formation of a stable complex. Probably present in a minority of gamma-secretase complexes compared to APH1A. This chain is Gamma-secretase subunit APH-1B (Aph1b), found in Mus musculus (Mouse).